The primary structure comprises 281 residues: Release factor glutamine methyltransferase (281 aa).

Residues Glu-141 and Asn-185 each coordinate S-adenosyl-L-methionine. Residue Asn-185 to Tyr-188 coordinates substrate.

This sequence belongs to the protein N5-glutamine methyltransferase family. PrmC subfamily.

It catalyses the reaction L-glutaminyl-[peptide chain release factor] + S-adenosyl-L-methionine = N(5)-methyl-L-glutaminyl-[peptide chain release factor] + S-adenosyl-L-homocysteine + H(+). Its function is as follows. Methylates the class 1 translation termination release factors RF1/PrfA and RF2/PrfB on the glutamine residue of the universally conserved GGQ motif. This Mycolicibacterium smegmatis (strain ATCC 700084 / mc(2)155) (Mycobacterium smegmatis) protein is Release factor glutamine methyltransferase.